The sequence spans 595 residues: Isoprene synthase, chloroplastic (595 aa).

The N-terminal 37 residues, 1–37, are a transit peptide targeting the chloroplast; sequence MATELLCLHRPISLTHKLFRNPLPKVIQATPLTLKLR. Aspartate 345 is a binding site for dimethylallyl diphosphate. 2 residues coordinate Mg(2+): aspartate 345 and aspartate 349. Residues 345 to 349 carry the DDXXD motif motif; that stretch reads DDIYD. Dimethylallyl diphosphate is bound by residues glutamate 423, arginine 486, and asparagine 489. Mg(2+)-binding residues include asparagine 489, serine 493, and glutamate 497.

It belongs to the terpene synthase family. Tpsb subfamily. In terms of assembly, homodimer. Mg(2+) serves as cofactor. Mn(2+) is required as a cofactor.

The protein localises to the plastid. It is found in the chloroplast. It catalyses the reaction dimethylallyl diphosphate = isoprene + diphosphate. It participates in secondary metabolite biosynthesis; terpenoid biosynthesis. Competitive inhibition is mediated by geranyl diphosphate (GPP). Functionally, lyase that catalyzes the formation of isoprene from dimethylallyl diphosphate via a syn-periplanar elimination mechanism in which the diphosphate-leaving group serves as a general base. The sequence is that of Isoprene synthase, chloroplastic from Populus canescens (Grey poplar).